Consider the following 159-residue polypeptide: Eukaryotic translation initiation factor 5A-5 (159 aa).

A compositionally biased stretch (basic and acidic residues) spans 1 to 12 (MSDEEHHFESKA). Positions 1 to 23 (MSDEEHHFESKADAGASKTYPQQ) are disordered. A Hypusine modification is found at Lys52.

It belongs to the eIF-5A family. In terms of processing, lys-52 undergoes hypusination, a unique post-translational modification that consists in the addition of a butylamino group from spermidine to lysine side chain, leading to the formation of the unusual amino acid hypusine. eIF-5As are the only known proteins to undergo this modification, which is essential for their function.

In terms of biological role, translation factor that promotes translation elongation and termination, particularly upon ribosome stalling at specific amino acid sequence contexts. Binds between the exit (E) and peptidyl (P) site of the ribosome and promotes rescue of stalled ribosome: specifically required for efficient translation of polyproline-containing peptides as well as other motifs that stall the ribosome. Acts as a ribosome quality control (RQC) cofactor by joining the RQC complex to facilitate peptidyl transfer during CAT tailing step. The polypeptide is Eukaryotic translation initiation factor 5A-5 (EIF5A5) (Solanum tuberosum (Potato)).